The following is a 904-amino-acid chain: Alanine--tRNA ligase (904 aa).

Residues histidine 594, histidine 598, cysteine 695, and histidine 699 each contribute to the Zn(2+) site.

Belongs to the class-II aminoacyl-tRNA synthetase family. Requires Zn(2+) as cofactor.

It localises to the cytoplasm. The catalysed reaction is tRNA(Ala) + L-alanine + ATP = L-alanyl-tRNA(Ala) + AMP + diphosphate. Catalyzes the attachment of alanine to tRNA(Ala) in a two-step reaction: alanine is first activated by ATP to form Ala-AMP and then transferred to the acceptor end of tRNA(Ala). Also edits incorrectly charged Ser-tRNA(Ala) and Gly-tRNA(Ala) via its editing domain. The protein is Alanine--tRNA ligase of Anaeromyxobacter sp. (strain Fw109-5).